We begin with the raw amino-acid sequence, 887 residues long: Pyruvate dehydrogenase E1 component (887 aa).

Asp-231, Asn-261, and Gln-263 together coordinate Mg(2+). An N6-acetyllysine modification is found at Lys-716.

As to quaternary structure, homodimer. Part of the PDH complex, consisting of multiple copies of pyruvate dehydrogenase (E1), dihydrolipoamide acetyltransferase (E2) and lipoamide dehydrogenase (E3). Mg(2+) serves as cofactor. It depends on thiamine diphosphate as a cofactor.

It catalyses the reaction N(6)-[(R)-lipoyl]-L-lysyl-[protein] + pyruvate + H(+) = N(6)-[(R)-S(8)-acetyldihydrolipoyl]-L-lysyl-[protein] + CO2. Component of the pyruvate dehydrogenase (PDH) complex, that catalyzes the overall conversion of pyruvate to acetyl-CoA and CO(2). This Escherichia coli O157:H7 protein is Pyruvate dehydrogenase E1 component (aceE).